Consider the following 452-residue polypeptide: UDP-N-acetylmuramate--L-alanine ligase (452 aa).

ATP is bound at residue 119–125; sequence GAHGKTS.

The protein belongs to the MurCDEF family.

Its subcellular location is the cytoplasm. It carries out the reaction UDP-N-acetyl-alpha-D-muramate + L-alanine + ATP = UDP-N-acetyl-alpha-D-muramoyl-L-alanine + ADP + phosphate + H(+). The protein operates within cell wall biogenesis; peptidoglycan biosynthesis. Its function is as follows. Cell wall formation. The protein is UDP-N-acetylmuramate--L-alanine ligase of Streptococcus mutans serotype c (strain ATCC 700610 / UA159).